Consider the following 151-residue polypeptide: uncharacterized protein (151 aa).

Residues G122 to F151 are disordered.

This is an uncharacterized protein from Homo sapiens (Human).